The chain runs to 207 residues: Small ribosomal subunit protein uS4 (207 aa).

The interval 22 to 54 (KSARRSISDKSKFESKPGQHGRTSGSRTSDFGL) is disordered. Residues 27–38 (SISDKSKFESKP) show a composition bias toward basic and acidic residues. Positions 42–52 (GRTSGSRTSDF) are enriched in polar residues. Positions 97-157 (SRLDNVVYRM…EKSKKQLRII (61 aa)) constitute an S4 RNA-binding domain.

It belongs to the universal ribosomal protein uS4 family. Part of the 30S ribosomal subunit. Contacts protein S5. The interaction surface between S4 and S5 is involved in control of translational fidelity.

Its function is as follows. One of the primary rRNA binding proteins, it binds directly to 16S rRNA where it nucleates assembly of the body of the 30S subunit. In terms of biological role, with S5 and S12 plays an important role in translational accuracy. This is Small ribosomal subunit protein uS4 from Leptothrix cholodnii (strain ATCC 51168 / LMG 8142 / SP-6) (Leptothrix discophora (strain SP-6)).